The following is a 72-amino-acid chain: Translational regulator CsrA (72 aa).

This sequence belongs to the CsrA/RsmA family. As to quaternary structure, homodimer; the beta-strands of each monomer intercalate to form a hydrophobic core, while the alpha-helices form wings that extend away from the core.

Its subcellular location is the cytoplasm. In terms of biological role, a translational regulator that binds mRNA to regulate translation initiation and/or mRNA stability. Usually binds in the 5'-UTR at or near the Shine-Dalgarno sequence preventing ribosome-binding, thus repressing translation. Its main target seems to be the major flagellin gene, while its function is anatagonized by FliW. In Lachnoclostridium phytofermentans (strain ATCC 700394 / DSM 18823 / ISDg) (Clostridium phytofermentans), this protein is Translational regulator CsrA.